A 263-amino-acid polypeptide reads, in one-letter code: Hydroxyacylglutathione hydrolase (263 aa).

Zn(2+) is bound by residues H56, H58, D60, H61, H115, D135, and H175.

Belongs to the metallo-beta-lactamase superfamily. Glyoxalase II family. Monomer. Zn(2+) serves as cofactor.

It catalyses the reaction an S-(2-hydroxyacyl)glutathione + H2O = a 2-hydroxy carboxylate + glutathione + H(+). The protein operates within secondary metabolite metabolism; methylglyoxal degradation; (R)-lactate from methylglyoxal: step 2/2. Thiolesterase that catalyzes the hydrolysis of S-D-lactoyl-glutathione to form glutathione and D-lactic acid. This is Hydroxyacylglutathione hydrolase from Nitrosococcus oceani (strain ATCC 19707 / BCRC 17464 / JCM 30415 / NCIMB 11848 / C-107).